The following is a 601-amino-acid chain: Potassium-transporting ATPase potassium-binding subunit (601 aa).

Helical transmembrane passes span 6–26 (IMLLVAFLGVLLALAYPLGLF), 65–85 (SYAIALLVFNTLGALFVYAVQ), 136–156 (ALTGQNFFSAATGIAVAFALI), 179–199 (LYILLPLAIVVSVALMGQGVI), 283–303 (FSNFIEMLAIFLIPAGLCFTF), 313–333 (GWAVLGAMTLIFVVMTSIVMT), 367–387 (FGISASALFTAVTTAASCGAV), 397–417 (MGGFVPLVLMQFGEVVFGGVG), 419–439 (GLYGMLIFAILSVFIAGLMIG), 458–478 (SIAILVTPTLVLVGTAIAVLV), 524–544 (MLAIAMWFGRFAMIVPILAIA), and 566–586 (LFVALLVGVVVLVGVLNYVPA).

It belongs to the KdpA family. In terms of assembly, the system is composed of three essential subunits: KdpA, KdpB and KdpC.

It is found in the cell inner membrane. Its function is as follows. Part of the high-affinity ATP-driven potassium transport (or Kdp) system, which catalyzes the hydrolysis of ATP coupled with the electrogenic transport of potassium into the cytoplasm. This subunit binds the periplasmic potassium ions and delivers the ions to the membrane domain of KdpB through an intramembrane tunnel. The polypeptide is Potassium-transporting ATPase potassium-binding subunit (Herminiimonas arsenicoxydans).